Here is a 447-residue protein sequence, read N- to C-terminus: MTKKIIALVGRPNVGKSTLFNRLSIRKKAIVHDLPGITRDRKYTDGKIGSFEFLLIDTPGLEENHDSMGARLMEQTTKAILEADLICFMVDGRSGILPNDKLLGSFVRKYNKPAILVVNKCEKAFDFDKEYYKLGFDSMVTISAEHGTGLIDLYDEIITKLPEEESIETNIADPIKGDYLQIVVSGRPNAGKSTFINALINDERLLTGPEAGITRESIEIDWHYKNNHIKLIDTAGLRKKSTITESLEKLSASDAINSIKFANTVILMIDALAPLKQQDLNIASHVVNEGRGIVIVVNKWDLVKESKKEAFQEEFYYQINTHLPQVKGVPVLFISAINKQNIEQVLDSCLKIYKIWNKKIATSKLNEWLNFTTEAHPLPLQKGGRRVRVKYMTQTKTRPPTFKLFSNNPEKITDSYTRYLVNNMRDAFDMPGIPIRFTYVKTKNPYV.

EngA-type G domains lie at 4–165 (KIIA…PEEE) and 180–357 (LQIV…KIWN). GTP-binding positions include 10 to 17 (GRPNVGKS), 57 to 61 (DTPGL), 119 to 122 (NKCE), 186 to 193 (GRPNAGKS), 233 to 237 (DTAGL), and 298 to 301 (NKWD). Positions 358–443 (KKIATSKLNE…PIRFTYVKTK (86 aa)) constitute a KH-like domain.

Belongs to the TRAFAC class TrmE-Era-EngA-EngB-Septin-like GTPase superfamily. EngA (Der) GTPase family. As to quaternary structure, associates with the 50S ribosomal subunit.

Its function is as follows. GTPase that plays an essential role in the late steps of ribosome biogenesis. In Rickettsia akari (strain Hartford), this protein is GTPase Der.